The primary structure comprises 159 residues: Dihydrofolate reductase (159 aa).

The DHFR domain occupies 1 to 158 (MISLIAALAV…HSYCFEILER (158 aa)). Ile5 serves as a coordination point for substrate. Residues Ala7 and 13–19 (VIGMENA) each bind NADP(+). Asp27 contributes to the substrate binding site. 45 to 46 (LT) lines the NADP(+) pocket. Arg52 and Arg57 together coordinate substrate. NADP(+) is bound by residues 63–64 (SS), Lys76, and 95–102 (GGGRVYEQ). Thr113 provides a ligand contact to substrate.

Belongs to the dihydrofolate reductase family.

The catalysed reaction is (6S)-5,6,7,8-tetrahydrofolate + NADP(+) = 7,8-dihydrofolate + NADPH + H(+). Its pathway is cofactor biosynthesis; tetrahydrofolate biosynthesis; 5,6,7,8-tetrahydrofolate from 7,8-dihydrofolate: step 1/1. Functionally, key enzyme in folate metabolism. Catalyzes an essential reaction for de novo glycine and purine synthesis, and for DNA precursor synthesis. This is Dihydrofolate reductase (folA) from Klebsiella aerogenes (Enterobacter aerogenes).